A 382-amino-acid chain; its full sequence is Gap junction alpha-1 protein (382 aa).

Residues 2–23 lie on the Cytoplasmic side of the membrane; sequence GDWSALGKLLDKVQAYSTAGGK. Ser5 carries the phosphoserine modification. The helical transmembrane segment at 24–44 threads the bilayer; the sequence is VWLSVLFIFRILLLGTAVESA. Over 45–76 the chain is Extracellular; it reads WGDEQSAFRCNTQQPGCENVCYDKSFPISHVR. Cystine bridges form between Cys54/Cys192 and Cys187/Cys198. Residues 77-97 traverse the membrane as a helical segment; sequence FWVLQIIFVSVPTLLYLAHVF. The Cytoplasmic segment spans residues 98-155; it reads YVMRKEEKLNKKEEELKVAQTDGVNVEMHLKQIEIKKFKYGIEEHGKVKMRGGLLRTY. A Glycyl lysine isopeptide (Lys-Gly) (interchain with G-Cter in SUMO) cross-link involves residue Lys144. The chain crosses the membrane as a helical span at residues 156 to 176; that stretch reads IISILFKSVFEVAFLLIQWYI. The Extracellular segment spans residues 177–207; the sequence is YGFSLSAVYTCKRDPCPHQVDCFLSRPTEKT. A helical transmembrane segment spans residues 208–228; that stretch reads IFIIFMLVVSLVSLALNIIEL. Residues 229–382 are Cytoplasmic-facing; the sequence is FYVFFKGVKD…SRPRPDDLEI (154 aa). Lys237 participates in a covalent cross-link: Glycyl lysine isopeptide (Lys-Gly) (interchain with G-Cter in SUMO). Positions 244-382 are interaction with NOV; sequence SDPYHATTGP…SRPRPDDLEI (139 aa). Residue Tyr247 is modified to Phosphotyrosine. A phosphoserine mark is found at Ser255, Ser257, and Ser262. Positions 264–382 are interaction with UBQLN4; that stretch reads KYAYFNGCSS…SRPRPDDLEI (119 aa). Cys271 carries the S-nitrosocysteine modification. Thr275 is modified (phosphothreonine). 3 positions are modified to phosphoserine: Ser306, Ser314, and Ser325. A compositionally biased stretch (polar residues) spans 317 to 332; sequence QNRMGQAGSTISNSHA. A disordered region spans residues 317-382; sequence QNRMGQAGST…SRPRPDDLEI (66 aa). Residue Thr326 is modified to Phosphothreonine. Phosphoserine occurs at positions 328, 330, 341, and 365. The segment covering 362 to 374 has biased composition (low complexity); the sequence is RPSSRASSRASSR. Ser368 is subject to Phosphoserine; by PKC/PRKCG and PKC/PRKCD. Residues Ser369 and Ser373 each carry the phosphoserine modification.

Belongs to the connexin family. Alpha-type (group II) subfamily. As to quaternary structure, a connexon is composed of a hexamer of connexins. Interacts with CSNK1D. Interacts with RIC1/CIP150. Interacts (via C-terminus) with TJP1. Interacts (via C-terminus) with SRC (via SH3 domain). Interacts (not ubiquitinated) with UBQLN4 (via UBA domain). Interacts with CNST. Interacts with SGSM3. Interacts with NOV. Interacts with TMEM65. Interacts with ANK3/ANKG and PKP2. In terms of processing, phosphorylation at Ser-325, Ser-328 and Ser-330 by CK1 modulates gap junction assembly. Phosphorylated at Ser-368 by PRKCG; phosphorylation induces disassembly of gap junction plaques and inhibition of gap junction activity. Phosphorylation at Ser-368 by PRKCD triggers its internalization into small vesicles leading to proteasome-mediated degradation. Post-translationally, sumoylated with SUMO1, SUMO2 and SUMO3, which may regulate the level of functional Cx43 gap junctions at the plasma membrane. May be desumoylated by SENP1 or SENP2. Acetylated in the developing cortex; leading to delocalization from the cell membrane. In terms of processing, S-nitrosylation at Cys-271 is enriched at the muscle endothelial gap junction in arteries, it augments channel permeability and may regulate of smooth muscle cell to endothelial cell communication. Expressed in heart, non-sensory epithelial cells, and in fibrocytes of the spiral ligament and the spiral limbus. Expressed in bladder smooth muscle cells (at protein level). Expressed in astrocytes (at protein level).

It localises to the cell membrane. Its subcellular location is the cell junction. It is found in the gap junction. The protein resides in the endoplasmic reticulum. In terms of biological role, gap junction protein that acts as a regulator of bladder capacity. A gap junction consists of a cluster of closely packed pairs of transmembrane channels, the connexons, through which materials of low MW diffuse from one cell to a neighboring cell. Negative regulator of bladder functional capacity: acts by enhancing intercellular electrical and chemical transmission, thus sensitizing bladder muscles to cholinergic neural stimuli and causing them to contract. May play a role in cell growth inhibition through the regulation of NOV expression and localization. Plays an essential role in gap junction communication in the ventricles. Connexin 43 is possibly the ATP-induced pore of mouse macrophages. The protein is Gap junction alpha-1 protein (Gja1) of Mus musculus (Mouse).